The chain runs to 220 residues: MTWSDILAEEKQKPYFKQILDFLACESAKGKVIFPTKENIFNAFKYTELDNLKVVILGQDPYHNYNQAHGLAFSVQKGVDIPPSLQNIYKELARSIPEFKTPNHGYLVDWAKQGVFLLNTTLTVEAHKANSHKDIGWETFTDTVINKISENKHNVVFMLWGSHARKKKVLIDSSRHLILESTHPSPLSAHRGFLGCNHFVDCNKYLIEKKDQKIDWNLLC.

Asp60 functions as the Proton acceptor in the catalytic mechanism.

It belongs to the uracil-DNA glycosylase (UDG) superfamily. UNG family.

It is found in the cytoplasm. The enzyme catalyses Hydrolyzes single-stranded DNA or mismatched double-stranded DNA and polynucleotides, releasing free uracil.. Its function is as follows. Excises uracil residues from the DNA which can arise as a result of misincorporation of dUMP residues by DNA polymerase or due to deamination of cytosine. This chain is Uracil-DNA glycosylase, found in Francisella tularensis subsp. tularensis (strain FSC 198).